A 351-amino-acid polypeptide reads, in one-letter code: Histidinol-phosphate aminotransferase 1 (351 aa).

Residue Lys210 is modified to N6-(pyridoxal phosphate)lysine.

This sequence belongs to the class-II pyridoxal-phosphate-dependent aminotransferase family. Histidinol-phosphate aminotransferase subfamily. Homodimer. Pyridoxal 5'-phosphate is required as a cofactor.

It carries out the reaction L-histidinol phosphate + 2-oxoglutarate = 3-(imidazol-4-yl)-2-oxopropyl phosphate + L-glutamate. It functions in the pathway amino-acid biosynthesis; L-histidine biosynthesis; L-histidine from 5-phospho-alpha-D-ribose 1-diphosphate: step 7/9. The sequence is that of Histidinol-phosphate aminotransferase 1 (hisC1) from Pasteurella multocida (strain Pm70).